The sequence spans 448 residues: Trigger factor (448 aa).

The PPIase FKBP-type domain maps to 172 to 257 (GDRVTVDFVG…MKKIEWPHLP (86 aa)).

It belongs to the FKBP-type PPIase family. Tig subfamily.

The protein resides in the cytoplasm. The catalysed reaction is [protein]-peptidylproline (omega=180) = [protein]-peptidylproline (omega=0). Involved in protein export. Acts as a chaperone by maintaining the newly synthesized protein in an open conformation. Functions as a peptidyl-prolyl cis-trans isomerase. The polypeptide is Trigger factor (Burkholderia ambifaria (strain ATCC BAA-244 / DSM 16087 / CCUG 44356 / LMG 19182 / AMMD) (Burkholderia cepacia (strain AMMD))).